The following is a 521-amino-acid chain: Bifunctional purine biosynthesis protein PurH (521 aa).

The region spanning 1-145 is the MGS-like domain; it reads MIKQALISVS…KNHRDVTVVV (145 aa).

Belongs to the PurH family.

It catalyses the reaction (6R)-10-formyltetrahydrofolate + 5-amino-1-(5-phospho-beta-D-ribosyl)imidazole-4-carboxamide = 5-formamido-1-(5-phospho-D-ribosyl)imidazole-4-carboxamide + (6S)-5,6,7,8-tetrahydrofolate. The catalysed reaction is IMP + H2O = 5-formamido-1-(5-phospho-D-ribosyl)imidazole-4-carboxamide. Its pathway is purine metabolism; IMP biosynthesis via de novo pathway; 5-formamido-1-(5-phospho-D-ribosyl)imidazole-4-carboxamide from 5-amino-1-(5-phospho-D-ribosyl)imidazole-4-carboxamide (10-formyl THF route): step 1/1. It participates in purine metabolism; IMP biosynthesis via de novo pathway; IMP from 5-formamido-1-(5-phospho-D-ribosyl)imidazole-4-carboxamide: step 1/1. This Burkholderia pseudomallei (strain 1106a) protein is Bifunctional purine biosynthesis protein PurH.